Reading from the N-terminus, the 334-residue chain is N-acetyl-gamma-glutamyl-phosphate reductase (334 aa).

The active site involves cysteine 154.

Belongs to the NAGSA dehydrogenase family. Type 1 subfamily.

The protein localises to the cytoplasm. The catalysed reaction is N-acetyl-L-glutamate 5-semialdehyde + phosphate + NADP(+) = N-acetyl-L-glutamyl 5-phosphate + NADPH + H(+). The protein operates within amino-acid biosynthesis; L-arginine biosynthesis; N(2)-acetyl-L-ornithine from L-glutamate: step 3/4. In terms of biological role, catalyzes the NADPH-dependent reduction of N-acetyl-5-glutamyl phosphate to yield N-acetyl-L-glutamate 5-semialdehyde. The chain is N-acetyl-gamma-glutamyl-phosphate reductase from Salmonella typhi.